A 610-amino-acid chain; its full sequence is UvrABC system protein C (610 aa).

Residues Ser-16 to Val-94 enclose the GIY-YIG domain. Residues Asp-204–Val-239 form the UVR domain.

It belongs to the UvrC family. Interacts with UvrB in an incision complex.

It localises to the cytoplasm. The UvrABC repair system catalyzes the recognition and processing of DNA lesions. UvrC both incises the 5' and 3' sides of the lesion. The N-terminal half is responsible for the 3' incision and the C-terminal half is responsible for the 5' incision. In Escherichia coli O1:K1 / APEC, this protein is UvrABC system protein C.